Consider the following 672-residue polypeptide: DNA ligase (672 aa).

NAD(+)-binding positions include 32–36, 81–82, and Glu-114; these read DSEYD and SL. Catalysis depends on Lys-116, which acts as the N6-AMP-lysine intermediate. Arg-137, Glu-174, Lys-291, and Lys-315 together coordinate NAD(+). Residues Cys-409, Cys-412, Cys-427, and Cys-433 each contribute to the Zn(2+) site. In terms of domain architecture, BRCT spans 592-672; it reads VNENPFKEKT…EFLEIVNSFS (81 aa).

Belongs to the NAD-dependent DNA ligase family. LigA subfamily. Requires Mg(2+) as cofactor. Mn(2+) serves as cofactor.

The enzyme catalyses NAD(+) + (deoxyribonucleotide)n-3'-hydroxyl + 5'-phospho-(deoxyribonucleotide)m = (deoxyribonucleotide)n+m + AMP + beta-nicotinamide D-nucleotide.. DNA ligase that catalyzes the formation of phosphodiester linkages between 5'-phosphoryl and 3'-hydroxyl groups in double-stranded DNA using NAD as a coenzyme and as the energy source for the reaction. It is essential for DNA replication and repair of damaged DNA. This Actinobacillus succinogenes (strain ATCC 55618 / DSM 22257 / CCUG 43843 / 130Z) protein is DNA ligase.